The following is a 367-amino-acid chain: Tetraacyldisaccharide 4'-kinase (367 aa).

68–75 contributes to the ATP binding site; sequence VLGGSGKT.

Belongs to the LpxK family.

The catalysed reaction is a lipid A disaccharide + ATP = a lipid IVA + ADP + H(+). The protein operates within glycolipid biosynthesis; lipid IV(A) biosynthesis; lipid IV(A) from (3R)-3-hydroxytetradecanoyl-[acyl-carrier-protein] and UDP-N-acetyl-alpha-D-glucosamine: step 6/6. Its function is as follows. Transfers the gamma-phosphate of ATP to the 4'-position of a tetraacyldisaccharide 1-phosphate intermediate (termed DS-1-P) to form tetraacyldisaccharide 1,4'-bis-phosphate (lipid IVA). The chain is Tetraacyldisaccharide 4'-kinase from Chlamydia caviae (strain ATCC VR-813 / DSM 19441 / 03DC25 / GPIC) (Chlamydophila caviae).